Consider the following 101-residue polypeptide: Small ribosomal subunit protein uS14 (101 aa).

Residues 1 to 10 are compositionally biased toward basic and acidic residues; it reads MAKKSSIEKN. The interval 1–25 is disordered; sequence MAKKSSIEKNNRRKKMAKNAAPKRE.

This sequence belongs to the universal ribosomal protein uS14 family. As to quaternary structure, part of the 30S ribosomal subunit. Contacts proteins S3 and S10.

In terms of biological role, binds 16S rRNA, required for the assembly of 30S particles and may also be responsible for determining the conformation of the 16S rRNA at the A site. The chain is Small ribosomal subunit protein uS14 from Rhodopseudomonas palustris (strain BisA53).